The chain runs to 393 residues: S-adenosylmethionine synthase 2 (393 aa).

A Mg(2+)-binding site is contributed by glutamate 9. Histidine 15 provides a ligand contact to ATP. A K(+)-binding site is contributed by glutamate 43. The L-methionine site is built by glutamate 56 and glutamine 99. ATP is bound by residues 167-169 (DGK), 235-238 (SGRF), aspartate 246, 252-253 (RK), alanine 269, lysine 273, and lysine 277. L-methionine is bound at residue aspartate 246. Lysine 277 serves as a coordination point for L-methionine.

The protein belongs to the AdoMet synthase family. As to quaternary structure, homotetramer. Requires Mn(2+) as cofactor. The cofactor is Mg(2+). Co(2+) serves as cofactor. K(+) is required as a cofactor.

The protein localises to the cytoplasm. It carries out the reaction L-methionine + ATP + H2O = S-adenosyl-L-methionine + phosphate + diphosphate. It functions in the pathway amino-acid biosynthesis; S-adenosyl-L-methionine biosynthesis; S-adenosyl-L-methionine from L-methionine: step 1/1. In terms of biological role, catalyzes the formation of S-adenosylmethionine from methionine and ATP. The reaction comprises two steps that are both catalyzed by the same enzyme: formation of S-adenosylmethionine (AdoMet) and triphosphate, and subsequent hydrolysis of the triphosphate. This Vitis vinifera (Grape) protein is S-adenosylmethionine synthase 2 (METK2).